The chain runs to 276 residues: MNGVSAVVLGVIEGVTEFLPVSSTAHLTIAEALMGMKTDAPAVTAFTAVIQMGAILAAIVYFRRDIRTVVTAWFRGLVRADERRSPDALLGWYVIAGTIPIGLAGYLGRNVIKHDLRSLWYVVAGLVLWSIAIVYAERTAAQRRDLRDMRLPDAVFIGVIQVLALVPGVSRSGATISAGLRQGFDRVAATRFSFLLAIPALLAAGIFELKDAVGTSGVSMASLVVGTGMAFLTAYASIAWLLRFVAHHSLTNFVWYRVTVAVFVVAALTTGLVHAV.

7 helical membrane passes run 42-62 (AVTA…IVYF), 88-108 (ALLG…GYLG), 116-136 (LRSL…IVYA), 149-169 (MRLP…VPGV), 187-207 (VAAT…AGIF), 222-242 (SLVV…AWLL), and 253-273 (FVWY…TGLV).

This sequence belongs to the UppP family.

The protein localises to the cell membrane. It carries out the reaction di-trans,octa-cis-undecaprenyl diphosphate + H2O = di-trans,octa-cis-undecaprenyl phosphate + phosphate + H(+). In terms of biological role, catalyzes the dephosphorylation of undecaprenyl diphosphate (UPP). Confers resistance to bacitracin. The polypeptide is Undecaprenyl-diphosphatase (Acidothermus cellulolyticus (strain ATCC 43068 / DSM 8971 / 11B)).